The primary structure comprises 332 residues: DNA-directed RNA polymerase subunit alpha (332 aa).

Residues 1–226 (MLIAQRPTLT…ELFGLARELN (226 aa)) form an alpha N-terminal domain (alpha-NTD) region. The interval 243–332 (LSSELSMPIE…GYDEDESTTI (90 aa)) is alpha C-terminal domain (alpha-CTD).

Belongs to the RNA polymerase alpha chain family. Homodimer. The RNAP catalytic core consists of 2 alpha, 1 beta, 1 beta' and 1 omega subunit. When a sigma factor is associated with the core the holoenzyme is formed, which can initiate transcription.

It catalyses the reaction RNA(n) + a ribonucleoside 5'-triphosphate = RNA(n+1) + diphosphate. DNA-dependent RNA polymerase catalyzes the transcription of DNA into RNA using the four ribonucleoside triphosphates as substrates. In Leifsonia xyli subsp. xyli (strain CTCB07), this protein is DNA-directed RNA polymerase subunit alpha.